The primary structure comprises 887 residues: DNA mismatch repair protein MutS (887 aa).

602 to 609 (GPNMSGKS) lines the ATP pocket.

It belongs to the DNA mismatch repair MutS family.

Its function is as follows. This protein is involved in the repair of mismatches in DNA. It is possible that it carries out the mismatch recognition step. This protein has a weak ATPase activity. In Staphylococcus saprophyticus subsp. saprophyticus (strain ATCC 15305 / DSM 20229 / NCIMB 8711 / NCTC 7292 / S-41), this protein is DNA mismatch repair protein MutS.